The chain runs to 955 residues: Protein translocase subunit SecA (955 aa).

ATP-binding positions include Gln87, 105-109 (GEGKT), and Asp494. The disordered stretch occupies residues 861–955 (AAPAPAAPRP…KKAPRTKRKR (95 aa)). The segment covering 874–888 (QEAAQQAQGTAAPSA) has biased composition (low complexity). Positions 943–955 (SKGKKAPRTKRKR) are enriched in basic residues.

It belongs to the SecA family. As to quaternary structure, monomer and homodimer. Part of the essential Sec protein translocation apparatus which comprises SecA, SecYEG and auxiliary proteins SecDF. Other proteins may also be involved.

It is found in the cell membrane. The protein localises to the cytoplasm. The catalysed reaction is ATP + H2O + cellular proteinSide 1 = ADP + phosphate + cellular proteinSide 2.. Part of the Sec protein translocase complex. Interacts with the SecYEG preprotein conducting channel. Has a central role in coupling the hydrolysis of ATP to the transfer of proteins into and across the cell membrane, serving as an ATP-driven molecular motor driving the stepwise translocation of polypeptide chains across the membrane. This chain is Protein translocase subunit SecA, found in Rhodococcus opacus (strain B4).